Reading from the N-terminus, the 1314-residue chain is Phosphoribosylformylglycinamidine synthase (1314 aa).

Residues 307 to 318 (GAATGAGGEIRD) and A674 each bind ATP. 4 residues coordinate Mg(2+): D675, E714, N718, and D880. S882 contributes to the ATP binding site. The Glutamine amidotransferase type-1 domain maps to 1063–1314 (IAILREQGVN…LFAGARKALG (252 aa)). The active-site Nucleophile is the C1156. Residues H1279 and E1281 contribute to the active site.

The protein in the N-terminal section; belongs to the FGAMS family. As to quaternary structure, monomer.

It localises to the cytoplasm. The enzyme catalyses N(2)-formyl-N(1)-(5-phospho-beta-D-ribosyl)glycinamide + L-glutamine + ATP + H2O = 2-formamido-N(1)-(5-O-phospho-beta-D-ribosyl)acetamidine + L-glutamate + ADP + phosphate + H(+). It functions in the pathway purine metabolism; IMP biosynthesis via de novo pathway; 5-amino-1-(5-phospho-D-ribosyl)imidazole from N(2)-formyl-N(1)-(5-phospho-D-ribosyl)glycinamide: step 1/2. Phosphoribosylformylglycinamidine synthase involved in the purines biosynthetic pathway. Catalyzes the ATP-dependent conversion of formylglycinamide ribonucleotide (FGAR) and glutamine to yield formylglycinamidine ribonucleotide (FGAM) and glutamate. This Neisseria gonorrhoeae (strain ATCC 700825 / FA 1090) protein is Phosphoribosylformylglycinamidine synthase.